A 158-amino-acid chain; its full sequence is C-type lectin lectoxin-Enh7 (158 aa).

A signal peptide spans 1–23; it reads MGQFTVVSLGLLAVFLSLSGAKG. 3 disulfides stabilise this stretch: cysteine 26-cysteine 37, cysteine 54-cysteine 154, and cysteine 129-cysteine 146. The C-type lectin domain occupies 33-155; the sequence is RNGVCNKLFP…CASLHPFICQ (123 aa). The Mannose-binding motif lies at 119-121; it reads EPN. 3 residues coordinate Ca(2+): glutamate 127, asparagine 142, and aspartate 143.

The protein belongs to the true venom lectin family. In terms of tissue distribution, expressed by the venom gland.

The protein localises to the secreted. In terms of biological role, mannose-binding lectin which recognizes specific carbohydrate structures and agglutinates a variety of animal cells by binding to cell-surface glycoproteins and glycolipids. May be a calcium-dependent lectin. The protein is C-type lectin lectoxin-Enh7 of Pseudoferania polylepis (Macleay's water snake).